Here is a 1007-residue protein sequence, read N- to C-terminus: MRLLPVWTAALLAAQAAGVALTHKLNGFTITEHPDAEKRELLQKYVTWDDKSLFINGERIMIFGAEIHPWRLPVPSLWRDILQKVKALGFNCVSFYVDWALLEGKPGEYRAEGSFAWEPFFDAASDLGIYLIARPGPYINAEASGGGFPGWLQRLNGTIRSSDQSYLDATENYVSHIGGLIAKYQITNGGPVILYQPDNEYSGGCCGQEFPNPDYFQYVIDQARRAGIVVPTISNDAWPGGHNAPGTGKGEVDIYGHDNYPLGFDCANPDVWPEGNLPTDYRDLHLEISPSTPYALVEYQVGAFDPWGGPGFEQCAALTGYEFERVFHKNTFSFGVGILSLYMTFGGTNWGNLGHPGGYTSYDYGSPIKETREITREKYSELKLLGNFIKSSPGYLLATPGKLTNTTYTNTADLTVTPLLGNGTGSFFVLRHSDYSSQASTPYKLRLPTSAGQLTIPQLGGSLVLNGRDSKVHLVDYDVAGTKILYSTAEVFTWKKFHDGKVLVLYGGPGEHHELAVSSKAKVKVVEGLGSGISSKQIRGAVVVAWDVEPARRIVQIGDLKIFLLDRNSAYNYWVPQLGTETSIPYATEKAVAASVIVKAGYLVRTAYVKGRDLHLTADFNATTPVEVIGAPKTAENLFINGKKAHHTVDKNGIWSTEVGYSPPKIVLPVLEDLKWKSIDTLPEIQPSYDDSPWPDANLPTKNTIYPLRTPTSLYASDYGFHTGYLLFRGHFTANGRESNFSIQTQGGQAFGSSVWLSGTYLGSWTGDNDYQDYNATYTLPSLKAGKEYVFTVVVDNMGLNENWIVGQDEMKKPRGILNYELSGHEASDITWKLTGNFGGEDYVDKVRGPLNEGGLYAERHGYHQPYPPTKSKDWKSSTPLTGLSKPGISFYTASFDLDIKSGWDVPIYFEFGNSTTPAPAYRVQLYVNGWQYGKYVNNIGPQTRFPVPEGILNYKGTNWVAVTLWALEGSGAKLDSFKLVHGIPVRTALDVEGVELPRYQSRKGVY.

Positions 1 to 18 (MRLLPVWTAALLAAQAAG) are cleaved as a signal peptide. Residues Tyr-96, Asn-140, Ala-141, and Glu-142 each contribute to the substrate site. Asn-156 carries an N-linked (GlcNAc...) asparagine glycan. Asn-199 contributes to the substrate binding site. Catalysis depends on Glu-200, which acts as the Proton donor. An intrachain disulfide couples Cys-205 to Cys-206. Residue Tyr-260 coordinates substrate. Residues Cys-266 and Cys-315 are joined by a disulfide bond. Glu-298 serves as the catalytic Nucleophile. Tyr-364 lines the substrate pocket. Residues Asn-405, Asn-422, Asn-621, Asn-740, Asn-775, and Asn-914 are each glycosylated (N-linked (GlcNAc...) asparagine).

Belongs to the glycosyl hydrolase 35 family.

Its subcellular location is the secreted. It carries out the reaction Hydrolysis of terminal non-reducing beta-D-galactose residues in beta-D-galactosides.. Its function is as follows. Cleaves beta-linked terminal galactosyl residues from gangliosides, glycoproteins, and glycosaminoglycans. The sequence is that of Probable beta-galactosidase A (lacA) from Emericella nidulans (strain FGSC A4 / ATCC 38163 / CBS 112.46 / NRRL 194 / M139) (Aspergillus nidulans).